Here is a 442-residue protein sequence, read N- to C-terminus: Tubulin beta chain (442 aa).

Residues glutamine 11, glutamate 69, serine 138, glycine 142, threonine 143, glycine 144, asparagine 204, and asparagine 226 each contribute to the GTP site. Glutamate 69 lines the Mg(2+) pocket.

Belongs to the tubulin family. As to quaternary structure, dimer of alpha and beta chains. A typical microtubule is a hollow water-filled tube with an outer diameter of 25 nm and an inner diameter of 15 nM. Alpha-beta heterodimers associate head-to-tail to form protofilaments running lengthwise along the microtubule wall with the beta-tubulin subunit facing the microtubule plus end conferring a structural polarity. Microtubules usually have 13 protofilaments but different protofilament numbers can be found in some organisms and specialized cells. The cofactor is Mg(2+).

It is found in the cytoplasm. Its subcellular location is the cytoskeleton. In terms of biological role, tubulin is the major constituent of microtubules, a cylinder consisting of laterally associated linear protofilaments composed of alpha- and beta-tubulin heterodimers. Microtubules grow by the addition of GTP-tubulin dimers to the microtubule end, where a stabilizing cap forms. Below the cap, tubulin dimers are in GDP-bound state, owing to GTPase activity of alpha-tubulin. This Paramecium tetraurelia protein is Tubulin beta chain (bPT2).